The primary structure comprises 306 residues: Tryptophan 2,3-dioxygenase (306 aa).

A disordered region spans residues 1–33 (MQPPGDDAAPRCPFAGAHAPDAPHVPEAAGDDA). Substrate contacts are provided by residues 75 to 79 (FIIQH), tyrosine 137, and arginine 141. Histidine 264 contributes to the heme binding site. Threonine 278 serves as a coordination point for substrate.

This sequence belongs to the tryptophan 2,3-dioxygenase family. As to quaternary structure, homotetramer. Heme is required as a cofactor.

The catalysed reaction is L-tryptophan + O2 = N-formyl-L-kynurenine. The protein operates within amino-acid degradation; L-tryptophan degradation via kynurenine pathway; L-kynurenine from L-tryptophan: step 1/2. Heme-dependent dioxygenase that catalyzes the oxidative cleavage of the L-tryptophan (L-Trp) pyrrole ring and converts L-tryptophan to N-formyl-L-kynurenine. Catalyzes the oxidative cleavage of the indole moiety. The sequence is that of Tryptophan 2,3-dioxygenase from Burkholderia pseudomallei (strain 668).